A 298-amino-acid chain; its full sequence is Estradiol 17-beta-dehydrogenase 11 (298 aa).

Positions 1-21 (MKYLLDLILLLPLLIVFSIES) are cleaved as a signal peptide. 40 to 64 (LITGAGHGIGRLTAYEFAKLNTKLV) provides a ligand contact to NADP(+). A substrate-binding site is contributed by serine 172. The active-site Proton acceptor is tyrosine 185.

This sequence belongs to the short-chain dehydrogenases/reductases (SDR) family. 17-beta-HSD 3 subfamily. As to expression, expressed in the liver (at protein level). Also expressed in the intestine and, at much lower levels, in the kidney.

The protein resides in the endoplasmic reticulum. The protein localises to the lipid droplet. It catalyses the reaction 17beta-estradiol + NAD(+) = estrone + NADH + H(+). The enzyme catalyses 17beta-estradiol + NADP(+) = estrone + NADPH + H(+). Can convert androstan-3-alpha,17-beta-diol (3-alpha-diol) to androsterone in vitro, suggesting that it may participate in androgen metabolism during steroidogenesis. May act by metabolizing compounds that stimulate steroid synthesis and/or by generating metabolites that inhibit it. Has no activity toward DHEA (dehydroepiandrosterone), or A-dione (4-androste-3,17-dione), and only a slight activity toward testosterone to A-dione. The sequence is that of Estradiol 17-beta-dehydrogenase 11 (Hsd17b11) from Mus musculus (Mouse).